The chain runs to 341 residues: tRNA N6-adenosine threonylcarbamoyltransferase (341 aa).

Positions 115 and 119 each coordinate Fe cation. Residues 137 to 141 (IVSGG), aspartate 170, glycine 183, aspartate 187, and asparagine 276 each bind substrate. Aspartate 304 is a binding site for Fe cation.

The protein belongs to the KAE1 / TsaD family. The cofactor is Fe(2+).

It is found in the cytoplasm. The catalysed reaction is L-threonylcarbamoyladenylate + adenosine(37) in tRNA = N(6)-L-threonylcarbamoyladenosine(37) in tRNA + AMP + H(+). Required for the formation of a threonylcarbamoyl group on adenosine at position 37 (t(6)A37) in tRNAs that read codons beginning with adenine. Is involved in the transfer of the threonylcarbamoyl moiety of threonylcarbamoyl-AMP (TC-AMP) to the N6 group of A37, together with TsaE and TsaB. TsaD likely plays a direct catalytic role in this reaction. This is tRNA N6-adenosine threonylcarbamoyltransferase from Staphylococcus aureus (strain JH1).